The following is a 398-amino-acid chain: Arylacetamide deacetylase (398 aa).

The Cytoplasmic portion of the chain corresponds to M1–I5. The helical; Signal-anchor for type II membrane protein transmembrane segment at S6 to I26 threads the bilayer. Over E27–L398 the chain is Lumenal. Positions H110–G112 match the Involved in the stabilization of the negatively charged intermediate by the formation of the oxyanion hole motif. An intrachain disulfide couples C115 to C339. S188 is an active-site residue. N-linked (GlcNAc...) asparagine glycosylation is present at N281. Residues D342 and H372 contribute to the active site.

Belongs to the 'GDXG' lipolytic enzyme family. N-glycosylated. As to expression, highest levels in liver with lower levels in jejunum and kidney.

It is found in the endoplasmic reticulum membrane. The protein localises to the microsome membrane. It carries out the reaction a triacylglycerol + H2O = a diacylglycerol + a fatty acid + H(+). Functionally, displays cellular triglyceride lipase activity in liver, increases the levels of intracellular fatty acids derived from the hydrolysis of newly formed triglyceride stores and plays a role in very low-density lipoprotein assembly. Displays serine esterase activity in liver. Deacetylates a variety of arylacetamide substrates, including xenobiotic compounds and procarcinogens, converting them to the primary arylamide compounds and increasing their toxicity. The sequence is that of Arylacetamide deacetylase (Aadac) from Mus musculus (Mouse).